Consider the following 452-residue polypeptide: Maltoporin (452 aa).

Positions 1 to 25 (MMITLRKLPLAVAVAAGVMSAQAMA) are cleaved as a signal peptide.

Belongs to the porin LamB (TC 1.B.3) family. Homotrimer formed of three 18-stranded antiparallel beta-barrels, containing three independent channels.

It localises to the cell outer membrane. It carries out the reaction beta-maltose(in) = beta-maltose(out). Functionally, involved in the transport of maltose and maltodextrins. The protein is Maltoporin of Salmonella paratyphi A (strain ATCC 9150 / SARB42).